The chain runs to 378 residues: Erythronate-4-phosphate dehydrogenase (378 aa).

Residues serine 45 and threonine 66 each coordinate substrate. 2 residues coordinate NAD(+): aspartate 146 and threonine 175. Arginine 208 is an active-site residue. Aspartate 232 is a binding site for NAD(+). Glutamate 237 is an active-site residue. Residue histidine 254 is the Proton donor of the active site. Glycine 257 contacts NAD(+). Residue tyrosine 258 participates in substrate binding.

The protein belongs to the D-isomer specific 2-hydroxyacid dehydrogenase family. PdxB subfamily. Homodimer.

Its subcellular location is the cytoplasm. It carries out the reaction 4-phospho-D-erythronate + NAD(+) = (R)-3-hydroxy-2-oxo-4-phosphooxybutanoate + NADH + H(+). It participates in cofactor biosynthesis; pyridoxine 5'-phosphate biosynthesis; pyridoxine 5'-phosphate from D-erythrose 4-phosphate: step 2/5. Functionally, catalyzes the oxidation of erythronate-4-phosphate to 3-hydroxy-2-oxo-4-phosphonooxybutanoate. This chain is Erythronate-4-phosphate dehydrogenase, found in Klebsiella pneumoniae (strain 342).